The chain runs to 213 residues: MNKTLIINAHPKVDDTSSVSIKVFNHFLESYTELIPNNETIEQINLYDDVVPMIDKTVLSAWEEQGNGQQLTDEEQKVTERMSEILQQFKSANTYVIVLPLHNFNIPSKLKDYMDNIMIARETFKYTETGSVGLLKDGRRMLVIQASGSIYTNDDWYTDVEYSHKYLKAMFNFLGIEDYQIVRAQGTAVLDPNEVLQNAYKEVKEAASRLANK.

18–20 (SVS) lines the FMN pocket.

Belongs to the azoreductase type 1 family. In terms of assembly, homodimer. FMN is required as a cofactor.

It catalyses the reaction 2 a quinone + NADH + H(+) = 2 a 1,4-benzosemiquinone + NAD(+). The catalysed reaction is N,N-dimethyl-1,4-phenylenediamine + anthranilate + 2 NAD(+) = 2-(4-dimethylaminophenyl)diazenylbenzoate + 2 NADH + 2 H(+). Functionally, quinone reductase that provides resistance to thiol-specific stress caused by electrophilic quinones. Its function is as follows. Also exhibits azoreductase activity. Catalyzes the reductive cleavage of the azo bond in aromatic azo compounds to the corresponding amines. The polypeptide is FMN-dependent NADH:quinone oxidoreductase 1 (Bacillus cereus (strain ATCC 10987 / NRS 248)).